The sequence spans 399 residues: Acetate kinase (399 aa).

Asn8 lines the Mg(2+) pocket. Residue Lys15 participates in ATP binding. Arg89 serves as a coordination point for substrate. Catalysis depends on Asp147, which acts as the Proton donor/acceptor. Residues 207–211, 284–286, and 332–336 each bind ATP; these read HMGNG, DMR, and GIGEN. Glu385 serves as a coordination point for Mg(2+).

Belongs to the acetokinase family. Homodimer. The cofactor is Mg(2+). Mn(2+) serves as cofactor.

It localises to the cytoplasm. The enzyme catalyses acetate + ATP = acetyl phosphate + ADP. It participates in metabolic intermediate biosynthesis; acetyl-CoA biosynthesis; acetyl-CoA from acetate: step 1/2. In terms of biological role, catalyzes the formation of acetyl phosphate from acetate and ATP. Can also catalyze the reverse reaction. The chain is Acetate kinase from Streptococcus mutans serotype c (strain ATCC 700610 / UA159).